The sequence spans 398 residues: Phosphoglycerate kinase (398 aa).

Residues 21 to 23, arginine 41, 64 to 67, arginine 123, and arginine 156 each bind substrate; these read DFN and HLGR. Residues lysine 207, glycine 294, glutamate 325, and 354–357 each bind ATP; that span reads GGDS.

It belongs to the phosphoglycerate kinase family. As to quaternary structure, monomer.

Its subcellular location is the cytoplasm. The enzyme catalyses (2R)-3-phosphoglycerate + ATP = (2R)-3-phospho-glyceroyl phosphate + ADP. The protein operates within carbohydrate degradation; glycolysis; pyruvate from D-glyceraldehyde 3-phosphate: step 2/5. The sequence is that of Phosphoglycerate kinase from Salinibacter ruber (strain DSM 13855 / M31).